We begin with the raw amino-acid sequence, 255 residues long: 3-dehydroquinate dehydratase (255 aa).

3-dehydroquinate-binding positions include 47–49 and Arg-83; that span reads EWR. Residue His-145 is the Proton donor/acceptor of the active site. Lys-172 functions as the Schiff-base intermediate with substrate in the catalytic mechanism. Residues Arg-215, Ser-234, and Gln-238 each contribute to the 3-dehydroquinate site.

It belongs to the type-I 3-dehydroquinase family. Homodimer.

It catalyses the reaction 3-dehydroquinate = 3-dehydroshikimate + H2O. It participates in metabolic intermediate biosynthesis; chorismate biosynthesis; chorismate from D-erythrose 4-phosphate and phosphoenolpyruvate: step 3/7. Involved in the third step of the chorismate pathway, which leads to the biosynthesis of aromatic amino acids. Catalyzes the cis-dehydration of 3-dehydroquinate (DHQ) and introduces the first double bond of the aromatic ring to yield 3-dehydroshikimate. This chain is 3-dehydroquinate dehydratase, found in Clostridium kluyveri (strain NBRC 12016).